Consider the following 56-residue polypeptide: UPF0391 membrane protein Noc_0484 (56 aa).

The next 2 helical transmembrane spans lie at 6–26 (VTFL…IAGI) and 29–49 (EIAW…LVLG).

It belongs to the UPF0391 family.

It is found in the cell membrane. This Nitrosococcus oceani (strain ATCC 19707 / BCRC 17464 / JCM 30415 / NCIMB 11848 / C-107) protein is UPF0391 membrane protein Noc_0484.